Reading from the N-terminus, the 214-residue chain is NADH-quinone oxidoreductase subunit C (214 aa).

This sequence belongs to the complex I 30 kDa subunit family. NDH-1 is composed of 14 different subunits. Subunits NuoB, C, D, E, F, and G constitute the peripheral sector of the complex.

The protein resides in the cell inner membrane. It catalyses the reaction a quinone + NADH + 5 H(+)(in) = a quinol + NAD(+) + 4 H(+)(out). In terms of biological role, NDH-1 shuttles electrons from NADH, via FMN and iron-sulfur (Fe-S) centers, to quinones in the respiratory chain. The immediate electron acceptor for the enzyme in this species is believed to be ubiquinone. Couples the redox reaction to proton translocation (for every two electrons transferred, four hydrogen ions are translocated across the cytoplasmic membrane), and thus conserves the redox energy in a proton gradient. The sequence is that of NADH-quinone oxidoreductase subunit C from Francisella tularensis subsp. novicida (strain U112).